We begin with the raw amino-acid sequence, 701 residues long: Translation initiation factor IF-2 (701 aa).

The segment covering 48-62 (KIYKPEKAEQSEKSQ) has biased composition (basic and acidic residues). A disordered region spans residues 48-123 (KIYKPEKAEQ…EPKEMPSKIT (76 aa)). Low complexity-rich tracts occupy residues 63–89 (QKNTQNKQQTTHNKGNQSNKGNQNNKP) and 97–109 (NNKNNKNNKNNKQ). The segment covering 110–119 (PKQEEPKEMP) has biased composition (basic and acidic residues). Residues 203–372 (ERPAVVTIMG…VLTSEVQELK (170 aa)) enclose the tr-type G domain. The G1 stretch occupies residues 212-219 (GHVDHGKT). 212–219 (GHVDHGKT) lines the GTP pocket. Positions 237–241 (GITQH) are G2. Positions 258–261 (DTPG) are G3. GTP is bound by residues 258–262 (DTPGH) and 312–315 (NKID). The segment at 312–315 (NKID) is G4. Residues 348 to 350 (SAL) form a G5 region.

This sequence belongs to the TRAFAC class translation factor GTPase superfamily. Classic translation factor GTPase family. IF-2 subfamily.

Its subcellular location is the cytoplasm. One of the essential components for the initiation of protein synthesis. Protects formylmethionyl-tRNA from spontaneous hydrolysis and promotes its binding to the 30S ribosomal subunits. Also involved in the hydrolysis of GTP during the formation of the 70S ribosomal complex. The protein is Translation initiation factor IF-2 of Staphylococcus saprophyticus subsp. saprophyticus (strain ATCC 15305 / DSM 20229 / NCIMB 8711 / NCTC 7292 / S-41).